We begin with the raw amino-acid sequence, 301 residues long: Fructokinase (301 aa).

Positions 165, 181, 184, and 187 each coordinate Zn(2+).

This sequence belongs to the ROK (NagC/XylR) family. Mg(2+) serves as cofactor.

The catalysed reaction is D-fructose + ATP = D-fructose 6-phosphate + ADP + H(+). With respect to regulation, inhibition by zinc ions. This Zymomonas mobilis subsp. mobilis (strain ATCC 31821 / ZM4 / CP4) protein is Fructokinase (frk).